Reading from the N-terminus, the 204-residue chain is Chaperone protein TorD (204 aa).

It belongs to the TorD/DmsD family. TorD subfamily.

It is found in the cytoplasm. Involved in the biogenesis of TorA. Acts on TorA before the insertion of the molybdenum cofactor and, as a result, probably favors a conformation of the apoenzyme that is competent for acquiring the cofactor. This chain is Chaperone protein TorD, found in Shewanella baltica (strain OS223).